A 235-amino-acid polypeptide reads, in one-letter code: Peptidyl-tRNA hydrolase (235 aa).

Tyrosine 14 provides a ligand contact to tRNA. The active-site Proton acceptor is histidine 19. The tRNA site is built by phenylalanine 64, asparagine 66, and asparagine 112. The tract at residues arginine 186 to arginine 235 is disordered. The segment covering lysine 198–arginine 207 has biased composition (basic and acidic residues).

The protein belongs to the PTH family. In terms of assembly, monomer.

It is found in the cytoplasm. It catalyses the reaction an N-acyl-L-alpha-aminoacyl-tRNA + H2O = an N-acyl-L-amino acid + a tRNA + H(+). Hydrolyzes ribosome-free peptidyl-tRNAs (with 1 or more amino acids incorporated), which drop off the ribosome during protein synthesis, or as a result of ribosome stalling. Functionally, catalyzes the release of premature peptidyl moieties from peptidyl-tRNA molecules trapped in stalled 50S ribosomal subunits, and thus maintains levels of free tRNAs and 50S ribosomes. In Dinoroseobacter shibae (strain DSM 16493 / NCIMB 14021 / DFL 12), this protein is Peptidyl-tRNA hydrolase.